A 55-amino-acid chain; its full sequence is uncharacterized protein (55 aa).

An N-terminal signal peptide occupies residues 1 to 25 (MKFVKAIWPFVAVAIVFMFMSAFKF).

This is an uncharacterized protein from Bacillus subtilis (strain 168).